A 469-amino-acid chain; its full sequence is Citrate synthase, mitochondrial (469 aa).

A mitochondrion-targeting transit peptide spans Met-1–Ser-30. Catalysis depends on residues His-304 and His-350. Oxaloacetate is bound at residue Arg-359. Residue Asp-405 is part of the active site. Oxaloacetate contacts are provided by Arg-431 and Arg-451.

This sequence belongs to the citrate synthase family. Homodimer.

The protein resides in the mitochondrion matrix. It carries out the reaction oxaloacetate + acetyl-CoA + H2O = citrate + CoA + H(+). The protein operates within carbohydrate metabolism; tricarboxylic acid cycle; isocitrate from oxaloacetate: step 1/2. In terms of biological role, key enzyme of the Krebs tricarboxylic acid cycle which catalyzes the synthesis of citrate from acetyl coenzyme A and oxaloacetate. The chain is Citrate synthase, mitochondrial (cs) from Thunnus albacares (Yellowfin tuna).